Reading from the N-terminus, the 437-residue chain is Zinc finger protein 491 (437 aa).

The C2H2-type 1; degenerate zinc finger occupies 35–59 (KSCESGTCGEIFMGYSSFNRNIRTD). The C2H2-type 2; degenerate zinc finger occupies 103–125 (FDCKECEKSFISPASIRRYMVTH). C2H2-type zinc fingers lie at residues 131–153 (YKCK…ERTH), 159–181 (YECK…ERTH), 187–209 (YECK…ERTH), 215–237 (YKCK…ERTH), 243–265 (YECK…MRMH), 271–293 (HKCK…ERSH), 299–321 (YKCK…ERTH), 327–349 (DGCK…GRTH), 355–377 (YECK…ERTH), 383–405 (YECK…ERIH), and 411–433 (YQCK…ERTH).

This sequence belongs to the krueppel C2H2-type zinc-finger protein family.

The protein resides in the nucleus. Its function is as follows. May be involved in transcriptional regulation. The protein is Zinc finger protein 491 (ZNF491) of Homo sapiens (Human).